The chain runs to 338 residues: Ketol-acid reductoisomerase (NADP(+)) (338 aa).

The KARI N-terminal Rossmann domain occupies methionine 1–threonine 181. NADP(+)-binding positions include tyrosine 24–glutamine 27, arginine 47, and serine 52. Residue histidine 107 is part of the active site. NADP(+) is bound at residue glycine 133. The 146-residue stretch at asparagine 182 to isoleucine 327 folds into the KARI C-terminal knotted domain. Mg(2+) contacts are provided by aspartate 190, glutamate 194, glutamate 226, and glutamate 230. Substrate is bound at residue serine 251.

The protein belongs to the ketol-acid reductoisomerase family. It depends on Mg(2+) as a cofactor.

The enzyme catalyses (2R)-2,3-dihydroxy-3-methylbutanoate + NADP(+) = (2S)-2-acetolactate + NADPH + H(+). It catalyses the reaction (2R,3R)-2,3-dihydroxy-3-methylpentanoate + NADP(+) = (S)-2-ethyl-2-hydroxy-3-oxobutanoate + NADPH + H(+). It functions in the pathway amino-acid biosynthesis; L-isoleucine biosynthesis; L-isoleucine from 2-oxobutanoate: step 2/4. It participates in amino-acid biosynthesis; L-valine biosynthesis; L-valine from pyruvate: step 2/4. Its function is as follows. Involved in the biosynthesis of branched-chain amino acids (BCAA). Catalyzes an alkyl-migration followed by a ketol-acid reduction of (S)-2-acetolactate (S2AL) to yield (R)-2,3-dihydroxy-isovalerate. In the isomerase reaction, S2AL is rearranged via a Mg-dependent methyl migration to produce 3-hydroxy-3-methyl-2-ketobutyrate (HMKB). In the reductase reaction, this 2-ketoacid undergoes a metal-dependent reduction by NADPH to yield (R)-2,3-dihydroxy-isovalerate. In Burkholderia cenocepacia (strain ATCC BAA-245 / DSM 16553 / LMG 16656 / NCTC 13227 / J2315 / CF5610) (Burkholderia cepacia (strain J2315)), this protein is Ketol-acid reductoisomerase (NADP(+)).